The sequence spans 395 residues: Flap endonuclease 1 (395 aa).

Residues 1-104 (MGIKHLYQII…GELAKRFMRK (104 aa)) are N-domain. Aspartate 34 contacts Mg(2+). The DNA site is built by arginine 47 and arginine 70. Residues aspartate 86, glutamate 158, glutamate 160, aspartate 179, and aspartate 181 each coordinate Mg(2+). The segment at 122 to 253 (EVEKFSRRTV…NTALKLIRDH (132 aa)) is I-domain. DNA is bound at residue glutamate 158. Positions 231 and 233 each coordinate DNA. Mg(2+) is bound at residue aspartate 233. The segment at 341 to 349 (QQSRLEGFF) is interaction with PCNA. Residues 360–389 (AVLKRKHEEKLELQKKKKKEDSKAKKEAKS) are compositionally biased toward basic and acidic residues. Residues 360–395 (AVLKRKHEEKLELQKKKKKEDSKAKKEAKSKPRGTT) form a disordered region.

The protein belongs to the XPG/RAD2 endonuclease family. FEN1 subfamily. As to quaternary structure, interacts with PCNA. Three molecules of FEN1 bind to one PCNA trimer with each molecule binding to one PCNA monomer. PCNA stimulates the nuclease activity without altering cleavage specificity. Requires Mg(2+) as cofactor. In terms of processing, phosphorylated. Phosphorylation upon DNA damage induces relocalization to the nuclear plasma.

The protein localises to the nucleus. It is found in the nucleolus. The protein resides in the nucleoplasm. Its subcellular location is the mitochondrion. Functionally, structure-specific nuclease with 5'-flap endonuclease and 5'-3' exonuclease activities involved in DNA replication and repair. During DNA replication, cleaves the 5'-overhanging flap structure that is generated by displacement synthesis when DNA polymerase encounters the 5'-end of a downstream Okazaki fragment. It enters the flap from the 5'-end and then tracks to cleave the flap base, leaving a nick for ligation. Also involved in the long patch base excision repair (LP-BER) pathway, by cleaving within the apurinic/apyrimidinic (AP) site-terminated flap. Acts as a genome stabilization factor that prevents flaps from equilibrating into structures that lead to duplications and deletions. Also possesses 5'-3' exonuclease activity on nicked or gapped double-stranded DNA, and exhibits RNase H activity. Also involved in replication and repair of rDNA and in repairing mitochondrial DNA. This chain is Flap endonuclease 1, found in Ajellomyces capsulatus (strain H143) (Darling's disease fungus).